Reading from the N-terminus, the 532-residue chain is Calnexin homolog 2 (532 aa).

A signal peptide spans 1–25 (MRERIITFVSLLLVALLSFPSVSYC). Topologically, residues 26–468 (DDQTILYESF…EKAETQPNLT (443 aa)) are lumenal. Residues serine 34 and aspartate 65 each contribute to the Ca(2+) site. Cysteine 110 and cysteine 145 are oxidised to a cystine. Residues tyrosine 114, lysine 116, tyrosine 136, and aspartate 143 each contribute to the an alpha-D-glucoside site. Residues 208 to 302 (NLLSAEDFEP…DEEDGEWEAP (95 aa)) form a disordered region. Positions 225 to 358 (IPDPEDKKPE…RDIPNPDYFE (134 aa)) are p domain (Extended arm). Basic and acidic residues predominate over residues 226 to 242 (PDPEDKKPEDWDERAKI). 5 consecutive repeat copies span residues 227 to 238 (DPEDKKPEDWDE), 244 to 255 (DPNAVKPDDWDE), 263 to 274 (DEEAEKPEGWLD), 282 to 293 (DPEASKPEDWDD), and 297 to 307 (GEWEAPKVSNT). 4 X approximate repeats stretches follow at residues 227–293 (DPED…DWDD) and 297–354 (GEWE…IPNP). Acidic residues-rich tracts occupy residues 252–283 (DWDE…VEDP) and 290–299 (DWDDEEDGEW). A disulfide bond links cysteine 309 and cysteine 315. A run of 3 repeats spans residues 316-326 (GEWKRPMKRNP), 330-340 (GKWSSPLIDNP), and 344-354 (GIWKPRDIPNP). Glutamate 373 contacts an alpha-D-glucoside. A Ca(2+)-binding site is contributed by aspartate 384. Residue asparagine 466 is glycosylated (N-linked (GlcNAc...) asparagine). The helical transmembrane segment at 469–489 (IGVLISIVIVFLSLFFKLIFG) threads the bilayer. Residues 490–532 (GAKAKVEKKKPETAAETSTSEAKTEEKAEAVAAPRKRQTRRES) are Cytoplasmic-facing. Positions 493-532 (AKVEKKKPETAAETSTSEAKTEEKAEAVAAPRKRQTRRES) are disordered. The span at 523 to 532 (PRKRQTRRES) shows a compositional bias: basic residues.

Belongs to the calreticulin family.

Its subcellular location is the endoplasmic reticulum membrane. In terms of biological role, calcium-binding protein that interacts with newly synthesized monoglucosylated glycoproteins in the endoplasmic reticulum. It may act in assisting protein assembly and/or in the retention within the ER of unassembled protein subunits. It seems to play a major role in the quality control apparatus of the ER by the retention of incorrectly folded proteins. The polypeptide is Calnexin homolog 2 (Arabidopsis thaliana (Mouse-ear cress)).